The sequence spans 238 residues: CBS domain-containing protein CBSX2, chloroplastic (238 aa).

The transit peptide at 1–71 directs the protein to the chloroplast; sequence MGSISLSNSM…ASVNNNNSVP (71 aa). 2 consecutive CBS domains span residues 83–145 and 177–234; these read MTPR…QNDT and MTPS…KRET.

Its subcellular location is the plastid. The protein resides in the chloroplast stroma. This is CBS domain-containing protein CBSX2, chloroplastic (CBSX2) from Arabidopsis thaliana (Mouse-ear cress).